Consider the following 210-residue polypeptide: Na(+)-translocating NADH-quinone reductase subunit D (210 aa).

A run of 6 helical transmembrane segments spans residues 9-29, 42-62, 72-92, 96-116, 131-151, and 178-198; these read AVLF…LGIC, LIMS…ISTI, IIVQ…VLQA, ATAK…IVMG, FLDG…VGFI, and MGLL…IWVL.

The protein belongs to the NqrDE/RnfAE family. Composed of six subunits; NqrA, NqrB, NqrC, NqrD, NqrE and NqrF.

It localises to the cell inner membrane. The enzyme catalyses a ubiquinone + n Na(+)(in) + NADH + H(+) = a ubiquinol + n Na(+)(out) + NAD(+). Its function is as follows. NQR complex catalyzes the reduction of ubiquinone-1 to ubiquinol by two successive reactions, coupled with the transport of Na(+) ions from the cytoplasm to the periplasm. NqrA to NqrE are probably involved in the second step, the conversion of ubisemiquinone to ubiquinol. This is Na(+)-translocating NADH-quinone reductase subunit D from Pseudoalteromonas translucida (strain TAC 125).